Reading from the N-terminus, the 299-residue chain is Putative arsenical pump-driving ATPase 2 (299 aa).

8–15 provides a ligand contact to ATP; the sequence is GKGGVGKT.

The protein belongs to the arsA ATPase family.

It catalyses the reaction arsenite(in) + ATP + H2O = arsenite(out) + ADP + phosphate + H(+). Its function is as follows. Anion-transporting ATPase. Catalyzes the extrusion of arsenite. This chain is Putative arsenical pump-driving ATPase 2 (arsA2), found in Aquifex aeolicus (strain VF5).